A 182-amino-acid polypeptide reads, in one-letter code: Ribosome-recycling factor (182 aa).

Belongs to the RRF family.

Its subcellular location is the cytoplasm. In terms of biological role, responsible for the release of ribosomes from messenger RNA at the termination of protein biosynthesis. May increase the efficiency of translation by recycling ribosomes from one round of translation to another. The protein is Ribosome-recycling factor of Prochlorococcus marinus (strain MIT 9313).